A 432-amino-acid polypeptide reads, in one-letter code: Benzoyl-CoA reductase subunit B (432 aa).

It belongs to the FldB/FldC dehydratase alpha/beta subunit family. As to quaternary structure, heterotetramer composed of A, B, C, and D subunits. Iron-sulfur cluster serves as cofactor. An oxidized flavin is required as a cofactor.

The enzyme catalyses cyclohexa-1,5-diene-1-carbonyl-CoA + oxidized 2[4Fe-4S]-[ferredoxin] + 2 ADP + 2 phosphate = reduced 2[4Fe-4S]-[ferredoxin] + benzoyl-CoA + 2 ATP + 2 H2O. The catalysed reaction is 3-hydroxybenzoyl-CoA + AH2 + 2 ATP + 2 H2O = 3-hydroxycyclohexa-1,5-diene-1-carbonyl-CoA + A + 2 ADP + 2 phosphate + 2 H(+). In terms of biological role, catalyzes the anaerobic reduction of benzoyl-CoA and 3-hydroxybenzoyl-CoA to form cyclohexa-1,5-diene-1-carbonyl-CoA and 3-hydroxycyclohexa-1,5-diene-1-carbonyl-CoA, respectively. The enzyme also reduces other benzoyl-CoA analogs with small substituents at the aromatic ring. The chain is Benzoyl-CoA reductase subunit B (bcrB) from Thauera aromatica.